Consider the following 191-residue polypeptide: MEYFDIRKMPVNLWRNGAGETREICCFPPATRDFHWRASIASIAGNGEFSLFPGVERVITLLEGGEVMLEGVNAFTHTLKRHQPFTFAGDSVVKATLSEGQMSMDLNIMTRRDRCKAKVRVADRTFTTFGSRGGVVFVISGAWQLGDKLLTADQGACWHDGKHTLRLLKPEGQLLFSEITWLPGYTPDTVQ.

Belongs to the Ves family.

In Citrobacter koseri (strain ATCC BAA-895 / CDC 4225-83 / SGSC4696), this protein is Protein Ves.